Here is a 615-residue protein sequence, read N- to C-terminus: Isocitrate dehydrogenase kinase/phosphatase (615 aa).

ATP-binding positions include alanine 328–leucine 334 and lysine 349. Aspartate 384 is a catalytic residue. Residues alanine 595–alanine 615 form a disordered region.

This sequence belongs to the AceK family.

The protein localises to the cytoplasm. The catalysed reaction is L-seryl-[isocitrate dehydrogenase] + ATP = O-phospho-L-seryl-[isocitrate dehydrogenase] + ADP + H(+). Its function is as follows. Bifunctional enzyme which can phosphorylate or dephosphorylate isocitrate dehydrogenase (IDH) on a specific serine residue. This is a regulatory mechanism which enables bacteria to bypass the Krebs cycle via the glyoxylate shunt in response to the source of carbon. When bacteria are grown on glucose, IDH is fully active and unphosphorylated, but when grown on acetate or ethanol, the activity of IDH declines drastically concomitant with its phosphorylation. This Cupriavidus taiwanensis (strain DSM 17343 / BCRC 17206 / CCUG 44338 / CIP 107171 / LMG 19424 / R1) (Ralstonia taiwanensis (strain LMG 19424)) protein is Isocitrate dehydrogenase kinase/phosphatase.